The following is a 270-amino-acid chain: Flagellar hook-basal body complex protein FlhO (270 aa).

Belongs to the flagella basal body rod proteins family.

In terms of biological role, not required for motility. The polypeptide is Flagellar hook-basal body complex protein FlhO (flhO) (Bacillus subtilis (strain 168)).